We begin with the raw amino-acid sequence, 861 residues long: Probable linoleate 9S-lipoxygenase 7 (861 aa).

In terms of domain architecture, PLAT spans 29-160; the sequence is NVLDFTDLAG…NYKSDRIFFA (132 aa). The 699-residue stretch at 163-861 folds into the Lipoxygenase domain; that stretch reads PYLPSETPEL…GKGIPNSVSI (699 aa). The segment at 220-246 is disordered; the sequence is TLGGSAEYPYPRRGRTGRPPTRTDPKS. Fe cation-binding residues include H522, H527, H713, N717, and I861.

This sequence belongs to the lipoxygenase family. Monomer. It depends on Fe cation as a cofactor. As to expression, expressed in tubers. Detected in sprouts and flowers. but not in leaves or stems.

The protein localises to the cytoplasm. The catalysed reaction is (9Z,12Z)-octadecadienoate + O2 = (9S)-hydroperoxy-(10E,12Z)-octadecadienoate. The protein operates within lipid metabolism; oxylipin biosynthesis. In terms of biological role, plant lipoxygenases may be involved in a number of diverse aspects of plant physiology including growth and development, pest resistance, and senescence or responses to wounding. Catalyzes the hydroperoxidation of lipids containing a cis,cis-1,4-pentadiene structure. The chain is Probable linoleate 9S-lipoxygenase 7 (LOX1.7) from Solanum tuberosum (Potato).